The sequence spans 338 residues: MNSVKRVKLNSKMSKQICTHSGSFHADESLAVYMLRLLPEFKDAKLVRSRNPKDWEASDILVDVGAQYDGVKFFDHHQRGFFETFNEKYKTKLSSAGLIFKHYGRDIIKTILNNKVSSSDLDLLYDKVYKQFVEALDANDNGISKYTIPKDSNLEPNFRDNAISIPGIISGMNPNWNEDTSDESFDRCFARASEFIGGVFVTLVRGYGQSWLPAKALVAQAIDERMDVDKSGKIIVLPQFCPWKEHLYELEREKNIEKQIEFVLFTDSSGAWRVSTVPINSTSFQFRRGLPEPLRGLRDEELSTKSGVPGCIFIHAAGFIGGAKSKEAVYELAKMSLA.

This sequence belongs to the MYG1 family.

This Saccharomyces cerevisiae (strain ATCC 204508 / S288c) (Baker's yeast) protein is MYG1 protein YER156C.